A 238-amino-acid chain; its full sequence is CASP-like protein 2BC2 (238 aa).

Over 1 to 66 (MPSSTYPRRR…FHQKVAVEKR (66 aa)) the chain is Cytoplasmic. Residues 67–87 (LKIGEVILRFAMIALALVAAV) form a helical membrane-spanning segment. Residues 88 to 111 (RVGTDTQTRTIFTIEKKAKYSDMK) are Extracellular-facing. The helical transmembrane segment at 112-132 (ALVFLVVMNGIVASYSLLQGL) threads the bilayer. The Cytoplasmic segment spans residues 133-148 (RCVLSIYTQSPLTSKP). The helical transmembrane segment at 149–169 (LAWLIFALDQTMAYFSLAAAA) threads the bilayer. The Extracellular portion of the chain corresponds to 170–200 (AAAESAYLAERGQTEFQWMKVCIFYEKFCHQ). A helical transmembrane segment spans residues 201–221 (IGEGLVSTFLVSLSMATVSGM). Residues 222 to 238 (SAYHLFRLYGSKGKSIQ) lie on the Cytoplasmic side of the membrane.

Belongs to the Casparian strip membrane proteins (CASP) family. In terms of assembly, homodimer and heterodimers.

It is found in the cell membrane. The protein is CASP-like protein 2BC2 of Picea sitchensis (Sitka spruce).